Consider the following 464-residue polypeptide: ATP synthase subunit beta (464 aa).

ATP is bound at residue 150–157 (GGAGVGKT).

Belongs to the ATPase alpha/beta chains family. As to quaternary structure, F-type ATPases have 2 components, CF(1) - the catalytic core - and CF(0) - the membrane proton channel. CF(1) has five subunits: alpha(3), beta(3), gamma(1), delta(1), epsilon(1). CF(0) has three main subunits: a(1), b(2) and c(9-12). The alpha and beta chains form an alternating ring which encloses part of the gamma chain. CF(1) is attached to CF(0) by a central stalk formed by the gamma and epsilon chains, while a peripheral stalk is formed by the delta and b chains.

It is found in the cell membrane. It catalyses the reaction ATP + H2O + 4 H(+)(in) = ADP + phosphate + 5 H(+)(out). In terms of biological role, produces ATP from ADP in the presence of a proton gradient across the membrane. The catalytic sites are hosted primarily by the beta subunits. This Dehalococcoides mccartyi (strain ATCC BAA-2266 / KCTC 15142 / 195) (Dehalococcoides ethenogenes (strain 195)) protein is ATP synthase subunit beta.